A 125-amino-acid polypeptide reads, in one-letter code: MARIVGVELPNNKKVWVALTYIYGIGRSRSFEILKNTGVDPDKRVGELTDEEISKITKYIQDHFKVEGELRSEVERNIRRLIEIGCYRGIRHKLGLPVRGQKTRSNARTRKGPRPSRIKTKKKSS.

A disordered region spans residues 97-125; it reads PVRGQKTRSNARTRKGPRPSRIKTKKKSS. Over residues 101-125 the composition is skewed to basic residues; it reads QKTRSNARTRKGPRPSRIKTKKKSS.

Belongs to the universal ribosomal protein uS13 family. Part of the 30S ribosomal subunit. Forms a loose heterodimer with protein S19. Forms two bridges to the 50S subunit in the 70S ribosome.

Located at the top of the head of the 30S subunit, it contacts several helices of the 16S rRNA. In the 70S ribosome it contacts the 23S rRNA (bridge B1a) and protein L5 of the 50S subunit (bridge B1b), connecting the 2 subunits; these bridges are implicated in subunit movement. Contacts the tRNAs in the A and P-sites. This chain is Small ribosomal subunit protein uS13, found in Thermotoga neapolitana (strain ATCC 49049 / DSM 4359 / NBRC 107923 / NS-E).